A 277-amino-acid chain; its full sequence is F420-dependent methylenetetrahydromethanopterin dehydrogenase (277 aa).

This sequence belongs to the MTD family.

The catalysed reaction is 5,10-methylenetetrahydromethanopterin + oxidized coenzyme F420-(gamma-L-Glu)(n) + 2 H(+) = 5,10-methenyl-5,6,7,8-tetrahydromethanopterin + reduced coenzyme F420-(gamma-L-Glu)(n). Its pathway is one-carbon metabolism; methanogenesis from CO(2); 5,10-methylene-5,6,7,8-tetrahydromethanopterin from 5,10-methenyl-5,6,7,8-tetrahydromethanopterin (coenzyme F420 route): step 1/1. Its function is as follows. Catalyzes the reversible reduction of methenyl-H(4)MPT(+) to methylene-H(4)MPT. The protein is F420-dependent methylenetetrahydromethanopterin dehydrogenase of Methanococcus maripaludis (strain C7 / ATCC BAA-1331).